Reading from the N-terminus, the 858-residue chain is Elongation factor 2 (858 aa).

Residues alanine 17 to valine 362 enclose the tr-type G domain. Alanine 26 to serine 33 is a GTP binding site. At threonine 54 the chain carries Phosphothreonine. The residue at position 57 (threonine 57) is a Phosphothreonine; by EEF2K. Residue threonine 59 is modified to Phosphothreonine. Lysine 152 carries the N6-succinyllysine modification. GTP-binding positions include asparagine 158–aspartate 161 and serine 216–leucine 218. Lysine 235 carries the N6-acetyllysine modification. Residue lysine 239 is modified to N6-acetyllysine; alternate. Lysine 239 participates in a covalent cross-link: Glycyl lysine isopeptide (Lys-Gly) (interchain with G-Cter in SUMO1); alternate. Tyrosine 265 is subject to Phosphotyrosine; by CSK. Position 272 is an N6-acetyllysine; alternate (lysine 272). The residue at position 272 (lysine 272) is an N6-succinyllysine; alternate. Position 275 is an N6-acetyllysine (lysine 275). Residue lysine 322 forms a Glycyl lysine isopeptide (Lys-Gly) (interchain with G-Cter in SUMO) linkage. Residue serine 325 is modified to Phosphoserine. Position 373 is a phosphotyrosine; by CSK (tyrosine 373). Residue threonine 435 is modified to Phosphothreonine. N6-acetyllysine occurs at positions 439 and 445. Serine 502 bears the Phosphoserine mark. The residue at position 525 (lysine 525) is an N6,N6,N6-trimethyllysine; by EEF2KMT. Residue lysine 529 forms a Glycyl lysine isopeptide (Lys-Gly) (interchain with G-Cter in SUMO) linkage. Position 572 is an N6-succinyllysine (lysine 572). A Phosphoserine; by CDK2 modification is found at serine 595. N6-acetyllysine is present on lysine 619. Histidine 715 carries the post-translational modification Diphthamide.

The protein belongs to the TRAFAC class translation factor GTPase superfamily. Classic translation factor GTPase family. EF-G/EF-2 subfamily. In terms of assembly, binds to 80S ribosomes. Actively translating ribosomes show mutually exclusive binding of eIF5a (EIF5A or EIF5A2) and EEF2/eEF2. Interacts with SERBP1; interaction sequesters EEF2/eEF2 at the A-site of the ribosome, thereby blocking the interaction sites of the mRNA-tRNA complex, promoting ribosome stabilization and hibernation. Interacts with HABP4; interaction takes place at the A-site of hibernating ribosomes and promotes ribosome stabilization. Component of the mRNA surveillance SURF complex, at least composed of ERF1, ERF3 (ERF3A or ERF3B), EEF2, UPF1/RENT1, SMG1, SMG8 and SMG9. Interacts with RBPMS2. Phosphorylation by EF-2 kinase completely inactivates EF-2; it requires prior phosphorylation by CDK2 at Ser-595 during mitotic prometaphase. Phosphorylation by CSK promotes SUMOylation, proteolytic cleavage, and nuclear translocation if the C-terminal fragment. In terms of processing, diphthamide is 2-[3-carboxyamido-3-(trimethyl-ammonio)propyl]histidine. Post-translationally, ISGylated. Proteolytically processed at two sites following phosphorylation by CSK. In terms of processing, SUMOylated following phosphorylation by CSK, promotes proteolytic cleavage.

It is found in the cytoplasm. The protein localises to the nucleus. It catalyses the reaction GTP + H2O = GDP + phosphate + H(+). In terms of biological role, catalyzes the GTP-dependent ribosomal translocation step during translation elongation. During this step, the ribosome changes from the pre-translocational (PRE) to the post-translocational (POST) state as the newly formed A-site-bound peptidyl-tRNA and P-site-bound deacylated tRNA move to the P and E sites, respectively. Catalyzes the coordinated movement of the two tRNA molecules, the mRNA and conformational changes in the ribosome. This Mus musculus (Mouse) protein is Elongation factor 2 (Eef2).